The following is a 357-amino-acid chain: Peptide chain release factor 1 (357 aa).

Gln-234 carries the post-translational modification N5-methylglutamine.

It belongs to the prokaryotic/mitochondrial release factor family. In terms of processing, methylated by PrmC. Methylation increases the termination efficiency of RF1.

The protein localises to the cytoplasm. Its function is as follows. Peptide chain release factor 1 directs the termination of translation in response to the peptide chain termination codons UAG and UAA. The protein is Peptide chain release factor 1 of Alkaliphilus oremlandii (strain OhILAs) (Clostridium oremlandii (strain OhILAs)).